Consider the following 458-residue polypeptide: Adenylosuccinate synthetase (458 aa).

GTP is bound by residues 17-23 and 45-47; these read GDEGKGK and GHT. The active-site Proton acceptor is D18. The Mg(2+) site is built by D18 and G45. Residues 18 to 21, 43 to 46, T137, R151, Q247, T262, and R330 contribute to the IMP site; these read DEGK and NAGH. The active-site Proton donor is H46. Residue 326-332 coordinates substrate; sequence VTTGRSR. GTP-binding positions include R332, 358–360, and 440–442; these read KLD and STS.

It belongs to the adenylosuccinate synthetase family. In terms of assembly, homodimer. The cofactor is Mg(2+).

The protein localises to the cytoplasm. The enzyme catalyses IMP + L-aspartate + GTP = N(6)-(1,2-dicarboxyethyl)-AMP + GDP + phosphate + 2 H(+). It functions in the pathway purine metabolism; AMP biosynthesis via de novo pathway; AMP from IMP: step 1/2. Functionally, plays an important role in the de novo pathway of purine nucleotide biosynthesis. Catalyzes the first committed step in the biosynthesis of AMP from IMP. The polypeptide is Adenylosuccinate synthetase (Acidovorax sp. (strain JS42)).